A 396-amino-acid chain; its full sequence is NADH-quinone oxidoreductase subunit D (396 aa).

This sequence belongs to the complex I 49 kDa subunit family. As to quaternary structure, NDH-1 is composed of 14 different subunits. Subunits NuoB, C, D, E, F, and G constitute the peripheral sector of the complex.

It localises to the cell inner membrane. It catalyses the reaction a quinone + NADH + 5 H(+)(in) = a quinol + NAD(+) + 4 H(+)(out). Its function is as follows. NDH-1 shuttles electrons from NADH, via FMN and iron-sulfur (Fe-S) centers, to quinones in the respiratory chain. The immediate electron acceptor for the enzyme in this species is believed to be ubiquinone. Couples the redox reaction to proton translocation (for every two electrons transferred, four hydrogen ions are translocated across the cytoplasmic membrane), and thus conserves the redox energy in a proton gradient. The protein is NADH-quinone oxidoreductase subunit D of Bartonella bacilliformis (strain ATCC 35685 / KC583 / Herrer 020/F12,63).